The sequence spans 356 residues: MDTSRKIIHIDMDAFYASVEQRDHPEFRGKPLIIGGDPNKRGVVSTCSYEARKYGVHSAMPTRQAAKLCPNGIFIHGNMAHYVEVSSQIREIFSRYTDVIEPLSLDEAYLDVTENKKGMKSATMVARDIQQTIYRELGLTASAGVSFNKFIAKIASDFKKPAGITVVAPEEAEAFLEQIPVTKFYGVGKVTAEKLHRLGIETGADLKKWSEWDLIRELHKHGYQLYRHVRGRSNNIVNPHRDRKSVGKETTFEFNVLDNRILEQSLMKFAKKVEERLIKLQKHGKTVVLKLRYSDFTTITKRLTLNEYTNDANQIYQAAALLLRESYKGQDSIRLIGLTVTNLKPVYFENLRLEGL.

A UmuC domain is found at 7–188; that stretch reads IIHIDMDAFY…IPVTKFYGVG (182 aa). Asp11 and Asp106 together coordinate Mg(2+). Residue Glu107 is part of the active site.

This sequence belongs to the DNA polymerase type-Y family. In terms of assembly, monomer. Mg(2+) is required as a cofactor.

The protein localises to the cytoplasm. The enzyme catalyses DNA(n) + a 2'-deoxyribonucleoside 5'-triphosphate = DNA(n+1) + diphosphate. In terms of biological role, poorly processive, error-prone DNA polymerase involved in untargeted mutagenesis. Copies undamaged DNA at stalled replication forks, which arise in vivo from mismatched or misaligned primer ends. These misaligned primers can be extended by PolIV. Exhibits no 3'-5' exonuclease (proofreading) activity. May be involved in translesional synthesis, in conjunction with the beta clamp from PolIII. The sequence is that of DNA polymerase IV from Listeria monocytogenes serotype 4a (strain HCC23).